Consider the following 300-residue polypeptide: Ribosomal RNA small subunit methyltransferase A (300 aa).

Asn36, Val38, Gly63, Glu84, Asp113, and Asn131 together coordinate S-adenosyl-L-methionine.

It belongs to the class I-like SAM-binding methyltransferase superfamily. rRNA adenine N(6)-methyltransferase family. RsmA subfamily.

The protein resides in the cytoplasm. It carries out the reaction adenosine(1518)/adenosine(1519) in 16S rRNA + 4 S-adenosyl-L-methionine = N(6)-dimethyladenosine(1518)/N(6)-dimethyladenosine(1519) in 16S rRNA + 4 S-adenosyl-L-homocysteine + 4 H(+). Its function is as follows. Specifically dimethylates two adjacent adenosines (A1518 and A1519) in the loop of a conserved hairpin near the 3'-end of 16S rRNA in the 30S particle. May play a critical role in biogenesis of 30S subunits. The polypeptide is Ribosomal RNA small subunit methyltransferase A (Kineococcus radiotolerans (strain ATCC BAA-149 / DSM 14245 / SRS30216)).